A 330-amino-acid polypeptide reads, in one-letter code: Short chain dehydrogenase yanD (330 aa).

The NADP(+) site is built by lysine 57, aspartate 86, asparagine 113, tyrosine 204, and lysine 208. The active-site Proton donor is the tyrosine 204. The active-site Lowers pKa of active site Tyr is the lysine 208.

This sequence belongs to the short-chain dehydrogenases/reductases (SDR) family.

The protein operates within secondary metabolite biosynthesis; terpenoid biosynthesis. Its function is as follows. Short chain dehydrogenase; part of the gene cluster that mediates the biosynthesis of yanuthone D, a fungal isoprenoid epoxycyclohexenone that acts as an antibiotic against fungi and bacteria. The first step of the pathway is the synthesis of 6-methylsalicylic acid (6-MSA) by the polyketide synthase yanA. 6-MSA is then converted to m-cresol by the decarboxylase yanB. The cytochrome P450 monooxygenase yanC then catalyzes the oxidation of m-cresol to toluquinol. Epoxidation of toluquinol is then performed by the short chain dehydrogenase yanD, with the help of yanE, and a further prenylation by yanG leads to 7-deacetoxyyanuthone A. The next step is the hydroxylation of C-22 of 7-deacetoxyyanuthone A by the cytochrome P450 monooxygenase yanH to yield 22-deacetylyanuthone A. O-Mevalon transferase yanI then attaches mevalon to the hydroxyl group of 22-deacetylyanuthone A to produce yanuthone E. Finally, the FAD-dependent monooxygenase yanF oxidizes the hydroxyl group at C15 of yanuthone E to form yanuthone D. Furthermore, several branching points in the pathway lead to the production of yanuthones F and G from 7-deacetoxyyanuthone A; yanuthones H and I from 22-deacetylyanuthone A; and yanuthone J from yanuthone E. YanD is also involved in the synthesis of yanuthone X1 which does not have 6-methylsalicylic acid (6-MSA) as precursor. The chain is Short chain dehydrogenase yanD from Aspergillus niger (strain ATCC 1015 / CBS 113.46 / FGSC A1144 / LSHB Ac4 / NCTC 3858a / NRRL 328 / USDA 3528.7).